Consider the following 478-residue polypeptide: GMP reductase (478 aa).

CBS domains are found at residues 95-152 and 153-211; these read VVDT…VRDI and ALSD…AVDA. Residues 245–247 and 295–297 contribute to the NADP(+) site; these read DTA and GVG. Cys-302 (thioimidate intermediate) is an active-site residue.

It belongs to the IMPDH/GMPR family. GuaB1 subfamily. Homooctamer composed of two tetramers. The oligomerization state is regulated by ligands and pH. A monovalent cation is required as a cofactor.

The enzyme catalyses IMP + NH4(+) + NADP(+) = GMP + NADPH + 2 H(+). It participates in purine metabolism; IMP biosynthesis via salvage pathway. Its activity is regulated as follows. Activity is allosterically regulated by the ATP/GTP ratio in a pH-dependent manner. At pH 7.8, GTP has only a minor positive effect and ATP only a minor negative effect on the activity, however, at lower pH values, the effects of ATP and GTP increase. ATP-dependent inhibition can be restored by increasing GTP concentration. IMP and XMP are competitive inhibitors. Its function is as follows. Involved in the purine-salvage pathway. Catalyzes the NADPH-dependent conversion of GMP to IMP. Is not essential for viability, but may contribute to the regulation of the purine nucleotide pool by recycling GMP to IMP. The sequence is that of GMP reductase from Mycolicibacterium smegmatis (strain ATCC 700084 / mc(2)155) (Mycobacterium smegmatis).